Consider the following 163-residue polypeptide: Disulfide bond formation protein B (163 aa).

The Cytoplasmic segment spans residues 1-9; the sequence is MKKLTYRKI. A helical transmembrane segment spans residues 10–26; it reads QSFQAIITVLVIFASFY. The Periplasmic segment spans residues 27–44; sequence LEYAAGLQPCPLCLMQRV. A disulfide bond links C36 and C39. A helical membrane pass occupies residues 45–58; it reads CVFILLGLMGVSLG. Over 59-64 the chain is Cytoplasmic; sequence TVKKAH. A helical transmembrane segment spans residues 65–82; it reads IVSLIQFQVACAGLYFSL. Residues 83 to 139 lie on the Periplasmic side of the membrane; that stretch reads RQLWLQSLPSDQAPACMPGLDVLIQYFPWQTVAKALFWGAGDCAEVTWTMFGVSMPG. A disulfide bridge links C98 with C125. Residues 140–158 form a helical membrane-spanning segment; it reads WAAMYFLSMAIMGLFLFFR. Residues 159–163 are Cytoplasmic-facing; sequence TRTIN.

The protein belongs to the DsbB family.

It is found in the cell inner membrane. Its function is as follows. Required for disulfide bond formation in some periplasmic proteins. Acts by oxidizing the DsbA protein. This chain is Disulfide bond formation protein B, found in Legionella pneumophila (strain Lens).